The chain runs to 312 residues: Urease accessory protein UreD (312 aa).

The protein belongs to the UreD family. As to quaternary structure, ureD, UreF and UreG form a complex that acts as a GTP-hydrolysis-dependent molecular chaperone, activating the urease apoprotein by helping to assemble the nickel containing metallocenter of UreC. The UreE protein probably delivers the nickel.

The protein resides in the cytoplasm. Its function is as follows. Required for maturation of urease via the functional incorporation of the urease nickel metallocenter. This chain is Urease accessory protein UreD, found in Marinomonas sp. (strain MWYL1).